The sequence spans 283 residues: Phosphatidylglycerol--prolipoprotein diacylglyceryl transferase (283 aa).

4 helical membrane passes run 20 to 40, 60 to 80, 94 to 114, and 121 to 141; these read IGGF…IIGL, LVIW…VAFE, IWQG…AILV, and LSFW…QAIG. A 1,2-diacyl-sn-glycero-3-phospho-(1'-sn-glycerol) is bound at residue Arg142. 3 helical membrane-spanning segments follow: residues 183–203, 214–234, and 248–268; these read FLYE…LFFY, GTIT…IEGL, and QVVS…LYLL.

The protein belongs to the Lgt family.

It is found in the cell inner membrane. The catalysed reaction is L-cysteinyl-[prolipoprotein] + a 1,2-diacyl-sn-glycero-3-phospho-(1'-sn-glycerol) = an S-1,2-diacyl-sn-glyceryl-L-cysteinyl-[prolipoprotein] + sn-glycerol 1-phosphate + H(+). It participates in protein modification; lipoprotein biosynthesis (diacylglyceryl transfer). Its function is as follows. Catalyzes the transfer of the diacylglyceryl group from phosphatidylglycerol to the sulfhydryl group of the N-terminal cysteine of a prolipoprotein, the first step in the formation of mature lipoproteins. This Synechocystis sp. (strain ATCC 27184 / PCC 6803 / Kazusa) protein is Phosphatidylglycerol--prolipoprotein diacylglyceryl transferase.